A 329-amino-acid chain; its full sequence is MAP kinase-activated protein kinase 2 (329 aa).

ATP contacts are provided by residues 1–7 (LGINGKV) and K22. A Protein kinase domain is found at 1–254 (LGINGKVLRI…ITEFMNHPWI (254 aa)). 68-70 (ECL) lines the staurosporine pocket. D115 functions as the Proton acceptor in the catalytic mechanism. Residue T151 is modified to Phosphothreonine; by MAPK14. A Phosphoserine; by MAPK14 modification is found at S201. Residue S257 is modified to Phosphoserine; by autocatalysis. The tract at residues 257 to 293 (STKVPQTPLHTSRVLKEDKERWEDVKEEMTSALATMR) is autoinhibitory helix. T263 carries the phosphothreonine; by MAPK14 modification. A Glycyl lysine isopeptide (Lys-Gly) (interchain with G-Cter in SUMO) cross-link involves residue K282. The Nuclear export signal (NES) motif lies at 285-294 (MTSALATMRV). Positions 295 to 319 (DYEQIKIKKIEDASNPLLLKRRKKA) are p38 MAPK-binding site. Short sequence motifs (bipartite nuclear localization signal) lie at residues 300 to 303 (KIKK) and 314 to 318 (KRRKK).

Belongs to the protein kinase superfamily. CAMK Ser/Thr protein kinase family. Heterodimer with p38-alpha/MAPK14; this heterodimer forms a stable complex: molecules are positioned 'face to face' so that the ATP-binding sites of both kinases are at the heterodimer interface. Interacts with PHC2. Interacts with HSF1. Post-translationally, sumoylation inhibits the protein kinase activity. Phosphorylated and activated by MAP kinase p38-alpha/MAPK14 at Thr-151, Ser-201 and Thr-263.

The protein localises to the cytoplasm. Its subcellular location is the nucleus. It catalyses the reaction L-seryl-[protein] + ATP = O-phospho-L-seryl-[protein] + ADP + H(+). The catalysed reaction is L-threonyl-[protein] + ATP = O-phospho-L-threonyl-[protein] + ADP + H(+). With respect to regulation, activated following phosphorylation by p38-alpha/MAPK14 following various stresses. Inhibited following sumoylation. Specifically inhibited by pyrrolopyridine inhibitors. In terms of biological role, stress-activated serine/threonine-protein kinase involved in cytokine production, endocytosis, reorganization of the cytoskeleton, cell migration, cell cycle control, chromatin remodeling, DNA damage response and transcriptional regulation. Following stress, it is phosphorylated and activated by MAP kinase p38-alpha/MAPK14, leading to phosphorylation of substrates. Phosphorylates serine in the peptide sequence, Hyd-X-R-X(2)-S, where Hyd is a large hydrophobic residue. Phosphorylates ALOX5, CDC25B, CDC25C, CEP131, ELAVL1, HNRNPA0, HSP27/HSPB1, KRT18, KRT20, LIMK1, LSP1, PABPC1, PARN, PDE4A, RCSD1, RPS6KA3, TAB3 and TTP/ZFP36. Phosphorylates HSF1; leading to the interaction with HSP90 proteins and inhibiting HSF1 homotrimerization, DNA-binding and transactivation activities. Mediates phosphorylation of HSP27/HSPB1 in response to stress, leading to the dissociation of HSP27/HSPB1 from large small heat-shock protein (sHsps) oligomers and impairment of their chaperone activities and ability to protect against oxidative stress effectively. Involved in inflammatory response by regulating tumor necrosis factor (TNF) and IL6 production post-transcriptionally: acts by phosphorylating AU-rich elements (AREs)-binding proteins ELAVL1, HNRNPA0, PABPC1 and TTP/ZFP36, leading to regulation of the stability and translation of TNF and IL6 mRNAs. Phosphorylation of TTP/ZFP36, a major post-transcriptional regulator of TNF, promotes its binding to 14-3-3 proteins and reduces its ARE mRNA affinity, leading to inhibition of dependent degradation of ARE-containing transcripts. Phosphorylates CEP131 in response to cellular stress following ultraviolet irradiation which promotes binding of CEP131 to 14-3-3 proteins and inhibits formation of novel centriolar satellites. Also involved in late G2/M checkpoint following DNA damage through a process of post-transcriptional mRNA stabilization: following DNA damage, relocalizes from nucleus to cytoplasm and phosphorylates HNRNPA0 and PARN, leading to stabilization of GADD45A mRNA. Involved in toll-like receptor signaling pathway (TLR) in dendritic cells: required for acute TLR-induced macropinocytosis by phosphorylating and activating RPS6KA3. This is MAP kinase-activated protein kinase 2 (MAPKAPK2) from Cricetulus longicaudatus (Long-tailed dwarf hamster).